Reading from the N-terminus, the 628-residue chain is MRYITTPIYYVNDVPHLGHAYTTIIADTLARFYRLQGHETRFLTGTDEHGQKIEEAAKLRNSTPQEYADKISFEFKKLWDEFEITYDIYARTTDTRHIEFIKAMFLKMWQKGDIYKDEYEGHYCISCESFFTQSQLINDCSCPDCGKQTRILKEESYFFKLSKYQDKILQWYEEKDPILPKNKKNELINFVQNGLKDLSITRTSFDWGIKLPQEINDDKHIIYVWLDALFIYVSSLDFQNKGENAKFWPAHVHLVGKDILRFHAIYWPAFLMSVDLPLPKFIGAHGWWTKEGEKMSKSKGNVVKPKEVVDAYGSEAFRYFLLREVPFGNDGDFSENMLINRINAELSNEFGNLLNRIIGMSTKYSQGNISKEGVLKFYNAELNQAKEHLNLAVEFLENLQCNRYLEELFKALSVANLAISKYEPWSLIKENKHEQANALVALCANILAKTSLLLSPTLPKSSQKVALALNFEISSANYTKMILDNELLDFKANPCEALFPKVEKALLKQEIKEEPKKEESPKIKIDDFAKIEIKVAKVLDCQNIEGSEKLLKFQLELDDKEIRQVLSGIAKYYKASDLIGKQVCVISNLKKAKIFGHESDGMILSAKSGDKLVLIAPEQLVQNGSLVG.

A 'HIGH' region motif is present at residues Tyr9 to His19. Residues Cys124, Cys127, Cys142, and Cys145 each contribute to the Zn(2+) site. The short motif at Lys294–Ser298 is the 'KMSKS' region element. Lys297 lines the ATP pocket. The tRNA-binding domain maps to Asp527 to Gly628.

This sequence belongs to the class-I aminoacyl-tRNA synthetase family. MetG type 2A subfamily. As to quaternary structure, homodimer. Zn(2+) serves as cofactor.

It is found in the cytoplasm. It catalyses the reaction tRNA(Met) + L-methionine + ATP = L-methionyl-tRNA(Met) + AMP + diphosphate. Its function is as follows. Is required not only for elongation of protein synthesis but also for the initiation of all mRNA translation through initiator tRNA(fMet) aminoacylation. The polypeptide is Methionine--tRNA ligase (metG) (Campylobacter jejuni subsp. jejuni serotype O:2 (strain ATCC 700819 / NCTC 11168)).